We begin with the raw amino-acid sequence, 260 residues long: Thiazole synthase (260 aa).

The Schiff-base intermediate with DXP role is filled by Lys102. 1-deoxy-D-xylulose 5-phosphate contacts are provided by residues Gly163, 189–190 (AG), and 211–212 (NT).

It belongs to the ThiG family. Homotetramer. Forms heterodimers with either ThiH or ThiS.

The protein localises to the cytoplasm. It catalyses the reaction [ThiS sulfur-carrier protein]-C-terminal-Gly-aminoethanethioate + 2-iminoacetate + 1-deoxy-D-xylulose 5-phosphate = [ThiS sulfur-carrier protein]-C-terminal Gly-Gly + 2-[(2R,5Z)-2-carboxy-4-methylthiazol-5(2H)-ylidene]ethyl phosphate + 2 H2O + H(+). The protein operates within cofactor biosynthesis; thiamine diphosphate biosynthesis. Catalyzes the rearrangement of 1-deoxy-D-xylulose 5-phosphate (DXP) to produce the thiazole phosphate moiety of thiamine. Sulfur is provided by the thiocarboxylate moiety of the carrier protein ThiS. In vitro, sulfur can be provided by H(2)S. This is Thiazole synthase from Citrifermentans bemidjiense (strain ATCC BAA-1014 / DSM 16622 / JCM 12645 / Bem) (Geobacter bemidjiensis).